Here is a 161-residue protein sequence, read N- to C-terminus: Anaerobic nitrite reductase Hb2 (161 aa).

A Globin domain is found at 8–157 (GFSEEQEALV…LVDAIKSEMK (150 aa)). The Homodimerization signature appears at 41–45 (EIAPS). Ser-51, Lys-65, His-69, Lys-99, Thr-103, and His-104 together coordinate heme b. Positions 111-123 (NEHFEVTKFALLE) match the Homodimerization motif.

It belongs to the plant globin family. As to quaternary structure, homodimer. Heme b is required as a cofactor. Predominantly expressed in roots, cotyledons, stems and nodules (confined to some cells associated with the nitrogen-fixing Bradyrhizobium symbiont), and, to a lower extent, in flowers, young leaves, pods and seeds.

Its subcellular location is the cytoplasm. It is found in the nucleus. The enzyme catalyses Fe(III)-heme b-[protein] + nitric oxide + H2O = Fe(II)-heme b-[protein] + nitrite + 2 H(+). Its function is as follows. Phytoglobin that reduces nitrite to nitric oxide (NO) under anoxic conditions (e.g. during flooding or in waterlogged soil) and upon root nodulation. Required for general plant development and during nodulation, especially for the onset of symbiosis. Monitors nitric oxide (NO) levels during early phase of the nitrogen-fixing symbiosis and buffers oxygen in functioning nodules. May not function as an oxygen storage or transport protein. Has an unusually high affinity for O(2) through a hexacoordinate heme iron because of a very low dissociation constant. Involved in water stress tolerance. This is Anaerobic nitrite reductase Hb2 from Glycine max (Soybean).